Consider the following 118-residue polypeptide: Large ribosomal subunit protein bL20c (118 aa).

It belongs to the bacterial ribosomal protein bL20 family.

The protein localises to the plastid. The protein resides in the chloroplast. Binds directly to 23S ribosomal RNA and is necessary for the in vitro assembly process of the 50S ribosomal subunit. It is not involved in the protein synthesizing functions of that subunit. In Gracilaria tenuistipitata var. liui (Red alga), this protein is Large ribosomal subunit protein bL20c.